An 87-amino-acid chain; its full sequence is Putative sodium channel toxin Ts40 (87 aa).

An N-terminal signal peptide occupies residues 1–19 (MTALFYLLFLTSVIIETHQ). 3 cysteine pairs are disulfide-bonded: Cys-41–Cys-63, Cys-47–Cys-68, and Cys-51–Cys-70.

This sequence belongs to the long (4 C-C) scorpion toxin superfamily. Sodium channel inhibitor family. As to expression, expressed by the venom gland.

It is found in the secreted. In terms of biological role, putative sodium channel toxin. The chain is Putative sodium channel toxin Ts40 from Tityus serrulatus (Brazilian scorpion).